The chain runs to 430 residues: DNA polymerase IV 1 (430 aa).

One can recognise a UmuC domain in the interval 45-225 (LAHIDCDAFY…KPVTLIWGVG (181 aa)). The Mg(2+) site is built by Asp49 and Asp142. Glu143 is an active-site residue.

It belongs to the DNA polymerase type-Y family. In terms of assembly, monomer. It depends on Mg(2+) as a cofactor.

The protein resides in the cytoplasm. It catalyses the reaction DNA(n) + a 2'-deoxyribonucleoside 5'-triphosphate = DNA(n+1) + diphosphate. In terms of biological role, poorly processive, error-prone DNA polymerase involved in untargeted mutagenesis. Copies undamaged DNA at stalled replication forks, which arise in vivo from mismatched or misaligned primer ends. These misaligned primers can be extended by PolIV. Exhibits no 3'-5' exonuclease (proofreading) activity. May be involved in translesional synthesis, in conjunction with the beta clamp from PolIII. The protein is DNA polymerase IV 1 (dinB1) of Rhizobium meliloti (strain 1021) (Ensifer meliloti).